A 665-amino-acid chain; its full sequence is Transketolase 1 (665 aa).

H26 lines the substrate pocket. Thiamine diphosphate contacts are provided by residues H66 and 114 to 116; that span reads GPL. D155 contacts Mg(2+). 2 residues coordinate thiamine diphosphate: G156 and N185. Positions 185 and 187 each coordinate Mg(2+). Substrate is bound by residues H261, R358, and S385. H261 serves as a coordination point for thiamine diphosphate. The active-site Proton donor is the E412. F438 contributes to the thiamine diphosphate binding site. H462, D470, and R521 together coordinate substrate.

It belongs to the transketolase family. In terms of assembly, homodimer. Mg(2+) is required as a cofactor. The cofactor is Ca(2+). It depends on Mn(2+) as a cofactor. Co(2+) serves as cofactor. Requires thiamine diphosphate as cofactor.

The enzyme catalyses D-sedoheptulose 7-phosphate + D-glyceraldehyde 3-phosphate = aldehydo-D-ribose 5-phosphate + D-xylulose 5-phosphate. Functionally, catalyzes the transfer of a two-carbon ketol group from a ketose donor to an aldose acceptor, via a covalent intermediate with the cofactor thiamine pyrophosphate. The protein is Transketolase 1 (tkt1) of Vibrio cholerae serotype O1 (strain ATCC 39315 / El Tor Inaba N16961).